The chain runs to 322 residues: Eukaryotic translation initiation factor 3 subunit I (322 aa).

WD repeat units follow at residues 4-43, 46-85, 141-180, 184-223, and 281-322; these read GHERSITQIKYNREGDLLFSSSKDQKPNVWYSLNGERLGT, GHQGAVWCLDVDWESRKLITAGGDMTAKLWDVEYGTVIAS, MTESKITSMLWGPLDETIITGHDNGNIAIWDVRKGQKVVD, DHTGVINDMQLSKDGTMFVTASKDATAKLFDSETLMCLKT, and GHFG…NIFE.

Belongs to the eIF-3 subunit I family. Component of the eukaryotic translation initiation factor 3 (eIF-3) complex. The eIF-3 complex interacts with pix.

It is found in the cytoplasm. In terms of biological role, component of the eukaryotic translation initiation factor 3 (eIF-3) complex, which is involved in protein synthesis of a specialized repertoire of mRNAs and, together with other initiation factors, stimulates binding of mRNA and methionyl-tRNAi to the 40S ribosome. The eIF-3 complex specifically targets and initiates translation of a subset of mRNAs involved in cell proliferation. In Drosophila willistoni (Fruit fly), this protein is Eukaryotic translation initiation factor 3 subunit I.